The following is a 217-amino-acid chain: Cytidylate kinase (217 aa).

21–29 is an ATP binding site; it reads GPAASGKGT.

The protein belongs to the cytidylate kinase family. Type 1 subfamily.

It is found in the cytoplasm. It catalyses the reaction CMP + ATP = CDP + ADP. The catalysed reaction is dCMP + ATP = dCDP + ADP. The protein is Cytidylate kinase of Rickettsia bellii (strain OSU 85-389).